The primary structure comprises 412 residues: Arginine biosynthesis bifunctional protein ArgJ (412 aa).

Substrate-binding residues include Thr158, Lys184, Thr195, Glu284, Asn407, and Ser412. Thr195 acts as the Nucleophile in catalysis.

Belongs to the ArgJ family. In terms of assembly, heterotetramer of two alpha and two beta chains.

Its subcellular location is the cytoplasm. The catalysed reaction is N(2)-acetyl-L-ornithine + L-glutamate = N-acetyl-L-glutamate + L-ornithine. It carries out the reaction L-glutamate + acetyl-CoA = N-acetyl-L-glutamate + CoA + H(+). The protein operates within amino-acid biosynthesis; L-arginine biosynthesis; L-ornithine and N-acetyl-L-glutamate from L-glutamate and N(2)-acetyl-L-ornithine (cyclic): step 1/1. It participates in amino-acid biosynthesis; L-arginine biosynthesis; N(2)-acetyl-L-ornithine from L-glutamate: step 1/4. Functionally, catalyzes two activities which are involved in the cyclic version of arginine biosynthesis: the synthesis of N-acetylglutamate from glutamate and acetyl-CoA as the acetyl donor, and of ornithine by transacetylation between N(2)-acetylornithine and glutamate. This chain is Arginine biosynthesis bifunctional protein ArgJ, found in Bartonella quintana (strain Toulouse) (Rochalimaea quintana).